Consider the following 202-residue polypeptide: Peptidyl-tRNA hydrolase (202 aa).

Residue Tyr19 coordinates tRNA. The Proton acceptor role is filled by His24. TRNA contacts are provided by Tyr70, Asn72, and Asn118.

The protein belongs to the PTH family. As to quaternary structure, monomer.

The protein localises to the cytoplasm. It catalyses the reaction an N-acyl-L-alpha-aminoacyl-tRNA + H2O = an N-acyl-L-amino acid + a tRNA + H(+). In terms of biological role, hydrolyzes ribosome-free peptidyl-tRNAs (with 1 or more amino acids incorporated), which drop off the ribosome during protein synthesis, or as a result of ribosome stalling. Functionally, catalyzes the release of premature peptidyl moieties from peptidyl-tRNA molecules trapped in stalled 50S ribosomal subunits, and thus maintains levels of free tRNAs and 50S ribosomes. This is Peptidyl-tRNA hydrolase from Prochlorococcus marinus (strain NATL1A).